The chain runs to 798 residues: Penicillin-binding protein 1A (798 aa).

The Cytoplasmic portion of the chain corresponds to 2-9 (IKKILTTC). The chain crosses the membrane as a helical; Signal-anchor for type II membrane protein span at residues 10–30 (FGLFFGFCVFGVGLVAIAILV). Topologically, residues 31-798 (TYPKLPSLDS…SKQQQLDSLF (768 aa)) are periplasmic. Residues 50-218 (LTIYSADGEV…SAYNPIVNPE (169 aa)) are transglycosylase. E88 acts as the Proton donor; for transglycosylase activity in catalysis. The transpeptidase stretch occupies residues 378–700 (RRALGFAARA…GTIAVPVWVD (323 aa)). The Acyl-ester intermediate; for transpeptidase activity role is filled by S461. The interval 739–798 (LMLDNSGIAPQPSRRAKEDDEAAVENEQQGRSDETRQDVQETPVLPSNTDSKQQQLDSLF) is disordered. The span at 766-777 (QQGRSDETRQDV) shows a compositional bias: basic and acidic residues. Positions 783-798 (LPSNTDSKQQQLDSLF) are enriched in polar residues.

In the N-terminal section; belongs to the glycosyltransferase 51 family. It in the C-terminal section; belongs to the transpeptidase family.

It is found in the cell inner membrane. The catalysed reaction is [GlcNAc-(1-&gt;4)-Mur2Ac(oyl-L-Ala-gamma-D-Glu-L-Lys-D-Ala-D-Ala)](n)-di-trans,octa-cis-undecaprenyl diphosphate + beta-D-GlcNAc-(1-&gt;4)-Mur2Ac(oyl-L-Ala-gamma-D-Glu-L-Lys-D-Ala-D-Ala)-di-trans,octa-cis-undecaprenyl diphosphate = [GlcNAc-(1-&gt;4)-Mur2Ac(oyl-L-Ala-gamma-D-Glu-L-Lys-D-Ala-D-Ala)](n+1)-di-trans,octa-cis-undecaprenyl diphosphate + di-trans,octa-cis-undecaprenyl diphosphate + H(+). It carries out the reaction Preferential cleavage: (Ac)2-L-Lys-D-Ala-|-D-Ala. Also transpeptidation of peptidyl-alanyl moieties that are N-acyl substituents of D-alanine.. It participates in cell wall biogenesis; peptidoglycan biosynthesis. Cell wall formation. Synthesis of cross-linked peptidoglycan from the lipid intermediates. The enzyme has a penicillin-insensitive transglycosylase N-terminal domain (formation of linear glycan strands) and a penicillin-sensitive transpeptidase C-terminal domain (cross-linking of the peptide subunits). Essential for cell wall synthesis. This chain is Penicillin-binding protein 1A (mrcA), found in Neisseria gonorrhoeae (strain ATCC 700825 / FA 1090).